A 231-amino-acid polypeptide reads, in one-letter code: Large ribosomal subunit protein uL1 (231 aa).

The protein belongs to the universal ribosomal protein uL1 family. As to quaternary structure, part of the 50S ribosomal subunit.

In terms of biological role, binds directly to 23S rRNA. The L1 stalk is quite mobile in the ribosome, and is involved in E site tRNA release. Protein L1 is also a translational repressor protein, it controls the translation of the L11 operon by binding to its mRNA. The polypeptide is Large ribosomal subunit protein uL1 (Pseudomonas fluorescens (strain ATCC BAA-477 / NRRL B-23932 / Pf-5)).